The primary structure comprises 357 residues: Uroporphyrinogen decarboxylase (357 aa).

Substrate-binding positions include 27-31 (RQAGR), aspartate 77, tyrosine 154, serine 209, and histidine 330.

Belongs to the uroporphyrinogen decarboxylase family. As to quaternary structure, homodimer.

It localises to the cytoplasm. It catalyses the reaction uroporphyrinogen III + 4 H(+) = coproporphyrinogen III + 4 CO2. Its pathway is porphyrin-containing compound metabolism; protoporphyrin-IX biosynthesis; coproporphyrinogen-III from 5-aminolevulinate: step 4/4. Functionally, catalyzes the decarboxylation of four acetate groups of uroporphyrinogen-III to yield coproporphyrinogen-III. The polypeptide is Uroporphyrinogen decarboxylase (Acinetobacter baumannii (strain SDF)).